Here is an 865-residue protein sequence, read N- to C-terminus: Alanine--tRNA ligase (865 aa).

The Zn(2+) site is built by histidine 554, histidine 558, cysteine 656, and histidine 660.

It belongs to the class-II aminoacyl-tRNA synthetase family. Requires Zn(2+) as cofactor.

Its subcellular location is the cytoplasm. It carries out the reaction tRNA(Ala) + L-alanine + ATP = L-alanyl-tRNA(Ala) + AMP + diphosphate. In terms of biological role, catalyzes the attachment of alanine to tRNA(Ala) in a two-step reaction: alanine is first activated by ATP to form Ala-AMP and then transferred to the acceptor end of tRNA(Ala). Also edits incorrectly charged Ser-tRNA(Ala) and Gly-tRNA(Ala) via its editing domain. This is Alanine--tRNA ligase from Francisella tularensis subsp. holarctica (strain LVS).